Consider the following 151-residue polypeptide: UPF0178 protein VSAL_I0701 (151 aa).

It belongs to the UPF0178 family.

The chain is UPF0178 protein VSAL_I0701 from Aliivibrio salmonicida (strain LFI1238) (Vibrio salmonicida (strain LFI1238)).